Reading from the N-terminus, the 595-residue chain is Aspartate--tRNA(Asp/Asn) ligase (595 aa).

Glu-175 serves as a coordination point for L-aspartate. An aspartate region spans residues 199 to 202 (QQYK). Residues Arg-221 and His-454 each contribute to the L-aspartate site. Residue 221–223 (RDE) coordinates ATP. Glu-488 provides a ligand contact to ATP. An L-aspartate-binding site is contributed by Arg-495. Residue 540 to 543 (GIDR) participates in ATP binding.

It belongs to the class-II aminoacyl-tRNA synthetase family. Type 1 subfamily. As to quaternary structure, homodimer.

Its subcellular location is the cytoplasm. It carries out the reaction tRNA(Asx) + L-aspartate + ATP = L-aspartyl-tRNA(Asx) + AMP + diphosphate. In terms of biological role, aspartyl-tRNA synthetase with relaxed tRNA specificity since it is able to aspartylate not only its cognate tRNA(Asp) but also tRNA(Asn). Reaction proceeds in two steps: L-aspartate is first activated by ATP to form Asp-AMP and then transferred to the acceptor end of tRNA(Asp/Asn). The sequence is that of Aspartate--tRNA(Asp/Asn) ligase from Brucella anthropi (strain ATCC 49188 / DSM 6882 / CCUG 24695 / JCM 21032 / LMG 3331 / NBRC 15819 / NCTC 12168 / Alc 37) (Ochrobactrum anthropi).